We begin with the raw amino-acid sequence, 204 residues long: Pectinesterase inhibitor 9 (204 aa).

Positions 1–23 (MELKNTIFLVILLSITILQSSSA) are cleaved as a signal peptide. Residue Asn-26 is glycosylated (N-linked (GlcNAc...) asparagine). Disulfide bonds link Cys-38–Cys-47 and Cys-106–Cys-157.

It belongs to the PMEI family. Binds reversibly to PME3 to inhibit its activity; the stability of the PME3-PMEI9 complex and the inhibition of the pectin methylesterase (PME) activity is pH-dependent, based on protonation status of amino-acids at the complex interface. In terms of tissue distribution, highly expressed in roots and etiolated hypocotyls. Expressed in seedlings, leaves, stems, siliques, floral buds and mature seeds.

It localises to the secreted. The protein localises to the extracellular space. Its subcellular location is the apoplast. Pectin methylesterase (PME) inhibitor that probably targets root-expressed PME and PME3 in a moderate pH-dependent manner, mainly in slightly acidic conditions (pH 6.3 and 5.0) and to some extent at pH 7.5; this processus relies on changes in the protonation of amino acids involved in intermolecular and intramolecular interactions. Regulates de-methylesterification of pectins in roots and affects root growth. The chain is Pectinesterase inhibitor 9 from Arabidopsis thaliana (Mouse-ear cress).